Consider the following 390-residue polypeptide: MTAVVEAFGKPHVNVGTIGHVDHGKTTLTAAITKHYGNFVAYDQIDKAPEERKRGITIATAHVEYQTEKRHYAHVDCPGHADYVKNMIVGAAQMDAAILVVSGVDGPMPQTREHILLAKQVGVGYIVVYINKADVADADMIDLVEMEVRELLSKYGFPGDEVPVVVGSALKALEDDSSEYGKKSIDKLMEKLDEYVAVPPRPVDLPFLLPIEDVFSISGRGTVVTGRIEKGEIKTGEEIEIIGLKATQKTICTGVEMFKKLLDKGSAGLNVGILLRGTKREEVERGQVLAKPGTITPHRKFKAEVYILKKEEGGRHTPFFANYQPQFYLRTTDVTGSIKLLDGKEMVMPGDNVSVEVELQVPIAMDKGLRFAIREGGRTVGSGVVSEILE.

The region spanning lysine 10 to arginine 201 is the tr-type G domain. Residues glycine 19–threonine 26 are G1. A GTP-binding site is contributed by glycine 19–threonine 26. Threonine 26 provides a ligand contact to Mg(2+). A G2 region spans residues glycine 55–alanine 59. The segment at aspartate 76 to glycine 79 is G3. GTP is bound by residues aspartate 76–histidine 80 and asparagine 131–aspartate 134. The tract at residues asparagine 131–aspartate 134 is G4. Positions serine 168–leucine 170 are G5.

Belongs to the TRAFAC class translation factor GTPase superfamily. Classic translation factor GTPase family. EF-Tu/EF-1A subfamily. In terms of assembly, monomer.

It localises to the cytoplasm. It catalyses the reaction GTP + H2O = GDP + phosphate + H(+). In terms of biological role, GTP hydrolase that promotes the GTP-dependent binding of aminoacyl-tRNA to the A-site of ribosomes during protein biosynthesis. The polypeptide is Elongation factor Tu 1 (Wolbachia pipientis wMel).